The following is a 180-amino-acid chain: Acireductone dioxygenase (180 aa).

Fe(2+)-binding residues include histidine 97, histidine 99, glutamate 103, and histidine 141. Residues histidine 97, histidine 99, glutamate 103, and histidine 141 each contribute to the Ni(2+) site.

This sequence belongs to the acireductone dioxygenase (ARD) family. As to quaternary structure, monomer. Requires Fe(2+) as cofactor. Ni(2+) serves as cofactor.

The enzyme catalyses 1,2-dihydroxy-5-(methylsulfanyl)pent-1-en-3-one + O2 = 3-(methylsulfanyl)propanoate + CO + formate + 2 H(+). It carries out the reaction 1,2-dihydroxy-5-(methylsulfanyl)pent-1-en-3-one + O2 = 4-methylsulfanyl-2-oxobutanoate + formate + 2 H(+). The protein operates within amino-acid biosynthesis; L-methionine biosynthesis via salvage pathway; L-methionine from S-methyl-5-thio-alpha-D-ribose 1-phosphate: step 5/6. Catalyzes 2 different reactions between oxygen and the acireductone 1,2-dihydroxy-3-keto-5-methylthiopentene (DHK-MTPene) depending upon the metal bound in the active site. Fe-containing acireductone dioxygenase (Fe-ARD) produces formate and 2-keto-4-methylthiobutyrate (KMTB), the alpha-ketoacid precursor of methionine in the methionine recycle pathway. Ni-containing acireductone dioxygenase (Ni-ARD) produces methylthiopropionate, carbon monoxide and formate, and does not lie on the methionine recycle pathway. The polypeptide is Acireductone dioxygenase (Cronobacter sakazakii (strain ATCC BAA-894) (Enterobacter sakazakii)).